A 312-amino-acid polypeptide reads, in one-letter code: Ribosomal protein L11 methyltransferase (312 aa).

S-adenosyl-L-methionine-binding residues include threonine 162, glycine 183, aspartate 205, and asparagine 248.

Belongs to the methyltransferase superfamily. PrmA family.

Its subcellular location is the cytoplasm. It carries out the reaction L-lysyl-[protein] + 3 S-adenosyl-L-methionine = N(6),N(6),N(6)-trimethyl-L-lysyl-[protein] + 3 S-adenosyl-L-homocysteine + 3 H(+). Methylates ribosomal protein L11. This Geobacillus thermodenitrificans (strain NG80-2) protein is Ribosomal protein L11 methyltransferase.